The sequence spans 895 residues: Protein translocase subunit SecA (895 aa).

ATP contacts are provided by residues Gln-89, 107 to 111, and Asp-502; that span reads GEGKT. Disordered stretches follow at residues 560-579 and 848-884; these read RRID…PGRT and AAPA…CGSG. Residues Cys-879, Cys-881, Cys-890, and His-891 each contribute to the Zn(2+) site.

Belongs to the SecA family. In terms of assembly, monomer and homodimer. Part of the essential Sec protein translocation apparatus which comprises SecA, SecYEG and auxiliary proteins SecDF-YajC and YidC. Zn(2+) serves as cofactor.

The protein localises to the cell inner membrane. Its subcellular location is the cytoplasm. The enzyme catalyses ATP + H2O + cellular proteinSide 1 = ADP + phosphate + cellular proteinSide 2.. Functionally, part of the Sec protein translocase complex. Interacts with the SecYEG preprotein conducting channel. Has a central role in coupling the hydrolysis of ATP to the transfer of proteins into and across the cell membrane, serving both as a receptor for the preprotein-SecB complex and as an ATP-driven molecular motor driving the stepwise translocation of polypeptide chains across the membrane. In Ruegeria sp. (strain TM1040) (Silicibacter sp.), this protein is Protein translocase subunit SecA.